We begin with the raw amino-acid sequence, 567 residues long: Oxygen-dependent choline dehydrogenase (567 aa).

6-35 (DYIIVGAGSAGNTLATRLTEDEGVTVLLLE) is an FAD binding site. Residue histidine 475 is the Proton acceptor of the active site.

This sequence belongs to the GMC oxidoreductase family. It depends on FAD as a cofactor.

It carries out the reaction choline + A = betaine aldehyde + AH2. The catalysed reaction is betaine aldehyde + NAD(+) + H2O = glycine betaine + NADH + 2 H(+). It functions in the pathway amine and polyamine biosynthesis; betaine biosynthesis via choline pathway; betaine aldehyde from choline (cytochrome c reductase route): step 1/1. In terms of biological role, involved in the biosynthesis of the osmoprotectant glycine betaine. Catalyzes the oxidation of choline to betaine aldehyde and betaine aldehyde to glycine betaine at the same rate. In Pseudomonas fluorescens (strain Pf0-1), this protein is Oxygen-dependent choline dehydrogenase.